The following is a 350-amino-acid chain: Chemokine C-C motif receptor-like 2 (350 aa).

Over 1–43 (MANYTSAPEDDYDVFIEDDLSNDERELCSPYDPQALLAQLVPY) the chain is Extracellular. Asparagine 3 carries an N-linked (GlcNAc...) asparagine glycan. Residues 44–64 (LFITVFLVGLLDNILVVLIMV) traverse the membrane as a helical segment. The Cytoplasmic portion of the chain corresponds to 65-74 (KYKGLKQVEN). A helical transmembrane segment spans residues 75-95 (IYLLNLAVCNLCFLCTLPFWV). Over 96–110 (HMAWHEGDPGEPLCK) the chain is Extracellular. An intrachain disulfide couples cysteine 109 to cysteine 187. The helical transmembrane segment at 111–131 (ILLVLYSVGLFSEAFFNVLLT) threads the bilayer. Residues 132-149 (VQRYQKFFQMRGFFSATR) lie on the Cytoplasmic side of the membrane. Residues 150–170 (MVAGSIFPSALVWVIAVLVML) traverse the membrane as a helical segment. At 171 to 204 (PELAFYKPQMENQKYKCFFGRPLFLPADETFWKH) the chain is on the extracellular side. Residues 205-225 (FLTLKMNILGFLLPLFVFVFC) form a helical membrane-spanning segment. At 226 to 244 (YVRMRRTLKFGERGYDLFK) the chain is on the cytoplasmic side. A helical membrane pass occupies residues 245–265 (LVFTIMVVFLLMWGPYNIALF). The Extracellular portion of the chain corresponds to 266–288 (LSAFNEHFSLHGCESSHNLDRST). Residues 289–309 (LITKIIATTHCCVNPLLYVFF) traverse the membrane as a helical segment. At 310–350 (DEAFRKHLYHFCHLCNDTAPQPTEEPAQGTSREEPCLSTKM) the chain is on the cytoplasmic side. The tract at residues 329-350 (PQPTEEPAQGTSREEPCLSTKM) is disordered.

It belongs to the G-protein coupled receptor 1 family.

The protein localises to the cell membrane. In terms of biological role, receptor for CCL19 and chemerin/RARRES2. Does not appear to be a signaling receptor, but may have a role in modulating chemokine-triggered immune responses by capturing and internalizing CCL19 or by presenting RARRES2 ligand to CMKLR1, a functional signaling receptor. Plays a critical role for the development of Th2 responses. The protein is Chemokine C-C motif receptor-like 2 (CCRL2) of Sus scrofa (Pig).